The primary structure comprises 94 residues: Elongation factor 1-beta (94 aa).

It belongs to the EF-1-beta/EF-1-delta family.

In terms of biological role, promotes the exchange of GDP for GTP in EF-1-alpha/GDP, thus allowing the regeneration of EF-1-alpha/GTP that could then be used to form the ternary complex EF-1-alpha/GTP/AAtRNA. In Ignicoccus hospitalis (strain KIN4/I / DSM 18386 / JCM 14125), this protein is Elongation factor 1-beta.